Consider the following 434-residue polypeptide: MTTGAPPFSGSSPQTTRPQTVAEKILSQRGSAAVYAGDLAVVEVDQVMVVDSIAQSFIERMERDLGAVPKYPERVSIVVDHVAPASTVSVAQAQKEAREYAAKTGVRLFDVGRGICHQVLMEEKLAQPGWIVLGSDSHSTTYGAVAAFGSGMGATDIALAAASGKTWLRVPESVKVTLTGDLRPGVTAKDVALEMIRVLGADGATYQSVEIHAGDRFTRGERMTLANLCVEAGAKAGLVVPGGEILTDYGYDVPAWVYPDEGAAYAREVEIDLSALHPRMSAPSEVDNVHDVAELRGLKVDQVFIGTCTNGRIEDLHAAAEVLRGRRVDPTTRLLVIPASSQVMEEALQDGTLLTLQRAGAVLGTPGCGPCMGRHQGVLAPGEVCVSTSNRNFIGRMGDKDAHIYLASPAVAAATAVMGRVALPEDVAQVAASA.

[4Fe-4S] cluster-binding residues include Cys308, Cys368, and Cys371.

The protein belongs to the aconitase/IPM isomerase family. LeuC type 2 subfamily. As to quaternary structure, heterodimer of LeuC and LeuD. [4Fe-4S] cluster serves as cofactor.

It catalyses the reaction (2R,3S)-3-isopropylmalate = (2S)-2-isopropylmalate. The protein operates within amino-acid biosynthesis; L-leucine biosynthesis; L-leucine from 3-methyl-2-oxobutanoate: step 2/4. Its function is as follows. Catalyzes the isomerization between 2-isopropylmalate and 3-isopropylmalate, via the formation of 2-isopropylmaleate. This chain is 3-isopropylmalate dehydratase large subunit 1, found in Deinococcus radiodurans (strain ATCC 13939 / DSM 20539 / JCM 16871 / CCUG 27074 / LMG 4051 / NBRC 15346 / NCIMB 9279 / VKM B-1422 / R1).